We begin with the raw amino-acid sequence, 344 residues long: Phenylalanine--tRNA ligase alpha subunit (344 aa).

Glutamate 269 is a binding site for Mg(2+).

Belongs to the class-II aminoacyl-tRNA synthetase family. Phe-tRNA synthetase alpha subunit type 1 subfamily. As to quaternary structure, tetramer of two alpha and two beta subunits. It depends on Mg(2+) as a cofactor.

The protein localises to the cytoplasm. It carries out the reaction tRNA(Phe) + L-phenylalanine + ATP = L-phenylalanyl-tRNA(Phe) + AMP + diphosphate + H(+). This is Phenylalanine--tRNA ligase alpha subunit from Ralstonia pickettii (strain 12J).